We begin with the raw amino-acid sequence, 1040 residues long: Multidrug resistance protein MdtB (1040 aa).

12 consecutive transmembrane segments (helical) span residues 25 to 45 (LLMA…PVAA), 347 to 367 (LMLA…NIPA), 369 to 389 (IIPG…MVFL), 396 to 416 (LTLM…IVVI), 440 to 460 (IGFT…PLLF), 472 to 492 (FAVT…TLTP), 537 to 557 (WLTL…WIVI), 863 to 883 (LGST…VLGV), 888 to 908 (FIHP…ALLA), 910 to 930 (IIAG…LIGI), 968 to 988 (ILMT…STGV), and 998 to 1018 (IAMV…TPVI).

Belongs to the resistance-nodulation-cell division (RND) (TC 2.A.6) family. MdtB subfamily. In terms of assembly, part of a tripartite efflux system composed of MdtA, MdtB and MdtC. MdtB forms a heteromultimer with MdtC.

Its subcellular location is the cell inner membrane. The polypeptide is Multidrug resistance protein MdtB (Salmonella paratyphi B (strain ATCC BAA-1250 / SPB7)).